A 267-amino-acid chain; its full sequence is Orotidine 5'-phosphate decarboxylase (267 aa).

K93 (proton donor) is an active-site residue.

It belongs to the OMP decarboxylase family. Type 2 subfamily.

The enzyme catalyses orotidine 5'-phosphate + H(+) = UMP + CO2. It functions in the pathway pyrimidine metabolism; UMP biosynthesis via de novo pathway; UMP from orotate: step 2/2. In Herpetosiphon aurantiacus (strain ATCC 23779 / DSM 785 / 114-95), this protein is Orotidine 5'-phosphate decarboxylase.